The sequence spans 188 residues: Molybdopterin synthase catalytic subunit (188 aa).

Serine 20 carries the phosphoserine modification. Residues 143–144 (HR), lysine 159, and 166–168 (KKE) each bind substrate.

It belongs to the MoaE family. MOCS2B subfamily. As to quaternary structure, heterotetramer; composed of 2 small (MOCS2A) and 2 large (MOCS2B) subunits. In terms of tissue distribution, highest levels are found in heart and skeletal muscle. Lower levels are present in brain, kidney and pancreas. Very low levels are found in lung and peripheral blood leukocytes.

It localises to the cytoplasm. The protein localises to the cytosol. It catalyses the reaction 2 [molybdopterin-synthase sulfur-carrier protein]-C-terminal-Gly-aminoethanethioate + cyclic pyranopterin phosphate + H2O = molybdopterin + 2 [molybdopterin-synthase sulfur-carrier protein]-C-terminal Gly-Gly + 2 H(+). Its pathway is cofactor biosynthesis; molybdopterin biosynthesis. Its function is as follows. Catalytic subunit of the molybdopterin synthase complex, a complex that catalyzes the conversion of precursor Z into molybdopterin. Acts by mediating the incorporation of 2 sulfur atoms from thiocarboxylated MOCS2A into precursor Z to generate a dithiolene group. The protein is Molybdopterin synthase catalytic subunit of Homo sapiens (Human).